Consider the following 153-residue polypeptide: Endoribonuclease YbeY (153 aa).

Residues His-118, His-122, and His-128 each coordinate Zn(2+).

This sequence belongs to the endoribonuclease YbeY family. Requires Zn(2+) as cofactor.

The protein resides in the cytoplasm. Its function is as follows. Single strand-specific metallo-endoribonuclease involved in late-stage 70S ribosome quality control and in maturation of the 3' terminus of the 16S rRNA. This is Endoribonuclease YbeY from Staphylococcus carnosus (strain TM300).